We begin with the raw amino-acid sequence, 170 residues long: Peptidyl-prolyl cis-trans isomerase ESS1 (170 aa).

The region spanning 9–43 (TGLPTPWTVRYSKSKKREYFFNPETKHSQWEEPEG) is the WW domain. The segment at 30–53 (NPETKHSQWEEPEGTNKDQLHKHL) is disordered. The span at 32 to 53 (ETKHSQWEEPEGTNKDQLHKHL) shows a compositional bias: basic and acidic residues. The 114-residue stretch at 57-170 (PVRVRCLHIL…SGVHVIKRVG (114 aa)) folds into the PpiC domain. Phosphoserine is present on Ser161.

Belongs to the PpiC/parvulin rotamase family. Interacts with the RNA polymerase II largest subunit (RPB1) and with the SIN1-RDP3 HDAC subunit SIN3.

The protein localises to the cytoplasm. Its subcellular location is the nucleus. The catalysed reaction is [protein]-peptidylproline (omega=180) = [protein]-peptidylproline (omega=0). With respect to regulation, inhibited by 5-hydroxy-1,4-naphthoquinone (juglone), but not by FK506 or cyclosporin A. Its function is as follows. Essential PPIase specific for phosphoserine and phosphothreonine N-terminal to the proline residue. Required for efficient pre-mRNA 3'-end processing and transcription termination, probably by inducing conformational changes by proline-directed isomerization in the C-terminal domain (CTD) of RPB1, thereby altering cofactor binding with the RNA polymerase II transcription complex. Also targets the SIN3-RPD3 histone deacetylase complex (HDAC). This Saccharomyces cerevisiae (strain ATCC 204508 / S288c) (Baker's yeast) protein is Peptidyl-prolyl cis-trans isomerase ESS1 (ESS1).